The chain runs to 244 residues: Small ribosomal subunit protein eS4 (244 aa).

The S4 RNA-binding domain maps to 43–106 (LPLLLVVRDV…DENYLVLFDE (64 aa)).

The protein belongs to the eukaryotic ribosomal protein eS4 family.

In Methanococcus maripaludis (strain C5 / ATCC BAA-1333), this protein is Small ribosomal subunit protein eS4.